A 195-amino-acid polypeptide reads, in one-letter code: UPF0301 protein Bpro_1142 (195 aa).

This sequence belongs to the UPF0301 (AlgH) family.

This chain is UPF0301 protein Bpro_1142, found in Polaromonas sp. (strain JS666 / ATCC BAA-500).